We begin with the raw amino-acid sequence, 823 residues long: Protein FAM193B (823 aa).

4 disordered regions span residues 1 to 78, 158 to 191, 209 to 281, and 381 to 409; these read MTRR…TSQS, SCKSQSCGGDSHSSSSSSSSSSSSSSSCHGNSGD, SPHS…PTTP, and CEADEGLGEEEDSSSERSSCTSSSTHQRD. Positions 26-36 are enriched in pro residues; it reads PQAPEPPPPPS. Basic and acidic residues predominate over residues 52 to 64; sequence PYRDDPREEDEPK. Composition is skewed to low complexity over residues 168–184 and 263–281; these read SHSSSSSSSSSSSSSSS and SHPGSFGSPPHPHLLPTTP. Acidic residues predominate over residues 382–393; sequence EADEGLGEEEDS. The stretch at 422–484 forms a coiled coil; that stretch reads GHNAEKEKAQ…RLQEIKNTVK (63 aa). 2 disordered regions span residues 503–583 and 599–775; these read FSKE…PENG and WVKT…PKDM. Polar residues-rich tracts occupy residues 516 to 526 and 641 to 657; these read LAPSNPSGSSE and QGNQAKKSEVSPASQSP. Residues serine 694, serine 706, and serine 813 each carry the phosphoserine modification.

The protein belongs to the FAM193 family.

It is found in the cytoplasm. Its subcellular location is the nucleus. This Bos taurus (Bovine) protein is Protein FAM193B (FAM193B).